The chain runs to 348 residues: Ion-translocating oxidoreductase complex subunit D (348 aa).

Helical transmembrane passes span leucine 15 to alanine 35, tyrosine 36 to isoleucine 56, leucine 67 to serine 87, isoleucine 88 to alanine 108, and valine 125 to isoleucine 145. Position 186 is an FMN phosphoryl threonine (threonine 186). 5 consecutive transmembrane segments (helical) span residues leucine 212–isoleucine 232, isoleucine 241–proline 261, leucine 265–threonine 285, leucine 298–proline 318, and alanine 320–glutamine 340.

Belongs to the NqrB/RnfD family. In terms of assembly, the complex is composed of six subunits: RnfA, RnfB, RnfC, RnfD, RnfE and RnfG. FMN serves as cofactor.

Its subcellular location is the cell inner membrane. In terms of biological role, part of a membrane-bound complex that couples electron transfer with translocation of ions across the membrane. The polypeptide is Ion-translocating oxidoreductase complex subunit D (Actinobacillus pleuropneumoniae serotype 7 (strain AP76)).